The primary structure comprises 352 residues: Peptide chain release factor 1 (352 aa).

An N5-methylglutamine modification is found at Gln-229.

The protein belongs to the prokaryotic/mitochondrial release factor family. Post-translationally, methylated by PrmC. Methylation increases the termination efficiency of RF1.

The protein localises to the cytoplasm. Its function is as follows. Peptide chain release factor 1 directs the termination of translation in response to the peptide chain termination codons UAG and UAA. This is Peptide chain release factor 1 from Granulibacter bethesdensis (strain ATCC BAA-1260 / CGDNIH1).